Consider the following 185-residue polypeptide: MRIRPHSETWLKRPPRPRVPARLRPWLTDPGSLTARIRSRCSLFSVNVLAQRLAVPHPDEAALLGLRRGELAWLREVLLVADGVPVVFARSILPRHDVRGAWILFQGLGSRPLGAALFADPRIGRKPLACACLDRRDARYHRASAAAAPRRLPLALWARRSLFGLRGRTLLVSEVFLPTILELPT.

Substrate-binding residues include arginine 75, leucine 113, and glutamate 174.

The protein belongs to the UbiC family.

The protein resides in the cytoplasm. It catalyses the reaction chorismate = 4-hydroxybenzoate + pyruvate. It participates in cofactor biosynthesis; ubiquinone biosynthesis. Its function is as follows. Removes the pyruvyl group from chorismate, with concomitant aromatization of the ring, to provide 4-hydroxybenzoate (4HB) for the ubiquinone pathway. The sequence is that of Probable chorismate pyruvate-lyase from Aromatoleum aromaticum (strain DSM 19018 / LMG 30748 / EbN1) (Azoarcus sp. (strain EbN1)).